Here is a 267-residue protein sequence, read N- to C-terminus: MEGYSRNGEISPKLLDLMIPQERRNWFHDEKNSVFKTEEKKLELKLGPPGEEDDDESMIRHMKKEPKDKSILSLAGKYFSPSSTKTTSHKRTAPGPVVGWPPVRSFRKNLASGSSSKLGNDSTTSNGVTLKNQKCDAAAKTTEPKRQGGMFVKINMYGVPIGRKVDLSAHNSYEQLSFTVDKLFRGLLAAQRDFPSSIEDEKPITGLLDGNGEYTLTYEDNEGDKMLVGDVPWQMFVSSVKRLRVIKTSEISSALTYGNGKQEKMRR.

An EAR-like (transcriptional repression) motif is present at residues 42–46; sequence LELKL. A disordered region spans residues 81–101; sequence PSSTKTTSHKRTAPGPVVGWP. The region spanning 149-248 is the PB1 domain; it reads GMFVKINMYG…SVKRLRVIKT (100 aa).

Belongs to the Aux/IAA family. Homodimers and heterodimers. Interacts with TPL.

The protein localises to the nucleus. In terms of biological role, aux/IAA proteins are short-lived transcriptional factors that function as repressors of early auxin response genes at low auxin concentrations. Repression is thought to result from the interaction with auxin response factors (ARFs), proteins that bind to the auxin-responsive promoter element (AuxRE). Formation of heterodimers with ARF proteins may alter their ability to modulate early auxin response genes expression. This chain is Auxin-responsive protein IAA18 (IAA18), found in Arabidopsis thaliana (Mouse-ear cress).